We begin with the raw amino-acid sequence, 402 residues long: WAT1-related protein At5g07050 (402 aa).

Transmembrane regions (helical) follow at residues 20 to 40 (FAMI…KISL), 48 to 68 (VLVV…AFFF), 74 to 94 (PKIT…GPVI), 109 to 129 (TFSC…AVLF), 149 to 169 (VVTV…VELF), 196 to 216 (FLKG…LFVL), 229 to 249 (LSLT…VTFV), 266 to 286 (LAAA…QGIV), 293 to 313 (VFAT…GSFV), and 318 to 338 (IFLG…AVLW). EamA domains lie at 29 to 159 (YAGM…MLMT) and 208 to 337 (LAWA…YAVL).

It belongs to the drug/metabolite transporter (DMT) superfamily. Plant drug/metabolite exporter (P-DME) (TC 2.A.7.4) family.

The protein localises to the membrane. The chain is WAT1-related protein At5g07050 from Arabidopsis thaliana (Mouse-ear cress).